A 206-amino-acid polypeptide reads, in one-letter code: Protein GrpE (206 aa).

Positions 1-10 (MTDPDLHQND) are enriched in basic and acidic residues. The interval 1 to 38 (MTDPDLHQNDPENPAQASEPVVSKPYIMPDDPETGSAE) is disordered.

Belongs to the GrpE family. In terms of assembly, homodimer.

It localises to the cytoplasm. Functionally, participates actively in the response to hyperosmotic and heat shock by preventing the aggregation of stress-denatured proteins, in association with DnaK and GrpE. It is the nucleotide exchange factor for DnaK and may function as a thermosensor. Unfolded proteins bind initially to DnaJ; upon interaction with the DnaJ-bound protein, DnaK hydrolyzes its bound ATP, resulting in the formation of a stable complex. GrpE releases ADP from DnaK; ATP binding to DnaK triggers the release of the substrate protein, thus completing the reaction cycle. Several rounds of ATP-dependent interactions between DnaJ, DnaK and GrpE are required for fully efficient folding. The sequence is that of Protein GrpE from Bradyrhizobium sp. (strain ORS 278).